We begin with the raw amino-acid sequence, 76 residues long: Putative phosphotransferase enzyme IIA component YyzE (76 aa).

The region spanning Met1–Ser76 is the PTS EIIA type-1 domain. The active-site Tele-phosphohistidine intermediate is His22.

It is found in the cytoplasm. The phosphoenolpyruvate-dependent sugar phosphotransferase system (PTS), a major carbohydrate active -transport system, catalyzes the phosphorylation of incoming sugar substrates concomitant with their translocation across the cell membrane. This chain is Putative phosphotransferase enzyme IIA component YyzE (yyzE), found in Bacillus subtilis (strain 168).